Consider the following 201-residue polypeptide: Dephospho-CoA kinase (201 aa).

The region spanning 4–201 (VIGLTGGIAS…LLDTWSNIEK (198 aa)) is the DPCK domain. An ATP-binding site is contributed by 12–17 (ASGKST).

This sequence belongs to the CoaE family.

It is found in the cytoplasm. It carries out the reaction 3'-dephospho-CoA + ATP = ADP + CoA + H(+). It participates in cofactor biosynthesis; coenzyme A biosynthesis; CoA from (R)-pantothenate: step 5/5. Its function is as follows. Catalyzes the phosphorylation of the 3'-hydroxyl group of dephosphocoenzyme A to form coenzyme A. In Bacillus licheniformis (strain ATCC 14580 / DSM 13 / JCM 2505 / CCUG 7422 / NBRC 12200 / NCIMB 9375 / NCTC 10341 / NRRL NRS-1264 / Gibson 46), this protein is Dephospho-CoA kinase.